Here is a 422-residue protein sequence, read N- to C-terminus: GTPase Obg (422 aa).

Positions 2–157 (AKFIDEIKLT…YLAHIVLKVM (156 aa)) constitute an Obg domain. An OBG-type G domain is found at 158–325 (SDVGIIGKPS…LKGKIWKILE (168 aa)). GTP contacts are provided by residues 164–171 (GKPSAGKS), 189–193 (FTTLV), 210–213 (DLPG), 279–282 (NKSD), and 306–308 (SAI). The Mg(2+) site is built by S171 and T191. Positions 334-420 (EEEETEENVE…ILDYEFEWDG (87 aa)) constitute an OCT domain.

It belongs to the TRAFAC class OBG-HflX-like GTPase superfamily. OBG GTPase family. Monomer. It depends on Mg(2+) as a cofactor.

The protein localises to the cytoplasm. In terms of biological role, an essential GTPase which binds GTP, GDP and possibly (p)ppGpp with moderate affinity, with high nucleotide exchange rates and a fairly low GTP hydrolysis rate. Plays a role in control of the cell cycle, stress response, ribosome biogenesis and in those bacteria that undergo differentiation, in morphogenesis control. The protein is GTPase Obg of Mycoplasmopsis agalactiae (strain NCTC 10123 / CIP 59.7 / PG2) (Mycoplasma agalactiae).